A 206-amino-acid polypeptide reads, in one-letter code: Ras-related protein ralB-A (206 aa).

A GTP-binding site is contributed by 21–28 (GSGGVGKS). Residues 43–51 (YEPTKADSY) carry the Effector region motif. GTP-binding positions include 68–72 (DTAGQ) and 128–131 (NKSD). Over residues 180–189 (KMSENKDKNG) the composition is skewed to basic and acidic residues. A disordered region spans residues 180–206 (KMSENKDKNGKKSGKSKKGFKQRCCLL). The segment covering 190-200 (KKSGKSKKGFK) has biased composition (basic residues). Cysteine 203 is modified (cysteine methyl ester). The S-geranylgeranyl cysteine moiety is linked to residue cysteine 203. The propeptide at 204–206 (CLL) is removed in mature form.

This sequence belongs to the small GTPase superfamily. Ras family. Interacts with ralbp1 and rap1gds1. As to expression, weakly expressed in adult tissues and highest levels were found in heart, brain and testes.

The protein resides in the cell membrane. The protein localises to the midbody. It catalyses the reaction GTP + H2O = GDP + phosphate + H(+). Its function is as follows. Multifunctional GTPase involved in a variety of cellular processes including gene expression, cell migration, cell proliferation, oncogenic transformation and membrane trafficking. Accomplishes its multiple functions by interacting with distinct downstream effectors. Acts as a GTP sensor for GTP-dependent exocytosis of dense core vesicles. Required both to stabilize the assembly of the exocyst complex and to localize functional exocyst complexes to the leading edge of migrating cells. Required for suppression of apoptosis. In late stages of cytokinesis, upon completion of the bridge formation between dividing cells, mediates exocyst recruitment to the midbody to drive abscission. Regulates the actin cytoskeleton to play a role in gastrulation or neurulation. During the cleavage stages, the GTP-bound form induces a cortical reaction that affects the localization of pigment granules. Activated by the FGF pathway via ras and ral-GDS, but independently of raf. Directs ralbp1 to the plasma membrane. Involved in ligand-dependent receptor mediated endocytosis of the EGF and insulin receptors. This is Ras-related protein ralB-A (ralb-a) from Xenopus laevis (African clawed frog).